The primary structure comprises 479 residues: MSDVTIVKEDWVQKRGEYIKNWRPRYFLLKTDGSFIGYKEKPQDVDLPYPLNNFSVAKCQLMKTERPKPNTFIIRCLQWTTVIERTFHVDTPEEREEWTEAIQAVADRLQRQEEERMNCSPTSQIDNIGEEEMDASTTHHKRKTMNDFDYLKLLGKGTFGKVILVREKASGKYYAMKILKKEVIIAKDEVAHTLTESRVLKNTRHPFLTSLKYSFQTKDRLCFVMEYVNGGELFFHLSRERVFSEDRTRFYGAEIVSALDYLHSGKIVYRDLKLENLMLDKDGHIKITDFGLCKEGITDAATMKTFCGTPEYLAPEVLEDNDYGRAVDWWGLGVVMYEMMCGRLPFYNQDHEKLFELILMEDIKFPRTLSSDAKSLLSGLLIKDPNKRLGGGPDDPKEIMRHSFFSGVNWQDVYDKKLVPPFKPQVTSETDTRYFDEEFTAQTITITPPEKDDDDGMDCMDNERRPHFPQFSYSASGRE.

Ser2 is subject to N-acetylserine. Positions 5 to 107 (TIVKEDWVQK…WTEAIQAVAD (103 aa)) constitute a PH domain. Residues Cys59 and Cys76 are joined by a disulfide bond. One can recognise a Protein kinase domain in the interval 148–405 (FDYLKLLGKG…PKEIMRHSFF (258 aa)). ATP contacts are provided by residues 154–162 (LGKGTFGKV) and Lys177. Asp271 functions as the Proton acceptor in the catalytic mechanism. A disulfide bridge links Cys293 with Cys307. The O-linked (GlcNAc) threonine glycan is linked to Thr302. Thr305 carries the post-translational modification Phosphothreonine; by PDPK1. Residue Thr309 is glycosylated (O-linked (GlcNAc) threonine). Residues 406–479 (SGVNWQDVYD…QFSYSASGRE (74 aa)) form the AGC-kinase C-terminal domain. The segment at 446-479 (ITPPEKDDDDGMDCMDNERRPHFPQFSYSASGRE) is disordered. Thr447 carries the phosphothreonine modification. A compositionally biased stretch (acidic residues) spans 451-460 (KDDDDGMDCM). Position 472 is a phosphoserine; by PKC/PRKCZ (Ser472). Ser472 carries an O-linked (GlcNAc) serine; alternate glycan.

Belongs to the protein kinase superfamily. AGC Ser/Thr protein kinase family. RAC subfamily. As to quaternary structure, interacts (via PH domain) with TCL1A; this enhances AKT3 phosphorylation and activation. Interacts with TRAF6. Interacts with KCTD20. Interacts with BTBD10. In terms of processing, phosphorylation on Thr-305 and Ser-472 is required for full activity. Phosphorylation of the activation loop at Thr-305 by PDPK1/PDK1 is a prerequisite for full activation. Phosphorylation at Ser-472 by mTORC2 in response to growth factors plays a key role in AKT1 activation by facilitating subsequent phosphorylation of the activation loop by PDPK1/PDK1. Ubiquitinated. When fully phosphorylated and translocated into the nucleus, undergoes 'Lys-48'-polyubiquitination catalyzed by TTC3, leading to its degradation by the proteasome. Post-translationally, O-GlcNAcylation at Thr-302 and Thr-309 inhibits activating phosphorylation at Thr-305 via disrupting the interaction between AKT and PDPK1/PDK1.

The protein localises to the nucleus. It localises to the cytoplasm. It is found in the membrane. It catalyses the reaction L-seryl-[protein] + ATP = O-phospho-L-seryl-[protein] + ADP + H(+). It carries out the reaction L-threonyl-[protein] + ATP = O-phospho-L-threonyl-[protein] + ADP + H(+). With respect to regulation, two specific sites, one in the kinase domain (Thr-305) and the other in the C-terminal regulatory region (Ser-472), need to be phosphorylated for its full activation. IGF-1 leads to the activation of AKT3, which may play a role in regulating cell survival. AKT3 is one of 3 closely related serine/threonine-protein kinases (AKT1, AKT2 and AKT3) called the AKT kinase, and which regulate many processes including metabolism, proliferation, cell survival, growth and angiogenesis. This is mediated through serine and/or threonine phosphorylation of a range of downstream substrates. Over 100 substrate candidates have been reported so far, but for most of them, no isoform specificity has been reported. AKT3 is the least studied AKT isoform. It plays an important role in brain development and is crucial for the viability of malignant glioma cells. AKT3 isoform may also be the key molecule in up-regulation and down-regulation of MMP13 via IL13. Required for the coordination of mitochondrial biogenesis with growth factor-induced increases in cellular energy demands. Down-regulation by RNA interference reduces the expression of the phosphorylated form of BAD, resulting in the induction of caspase-dependent apoptosis. The sequence is that of RAC-gamma serine/threonine-protein kinase (Akt3) from Rattus norvegicus (Rat).